Here is a 630-residue protein sequence, read N- to C-terminus: DNA topoisomerase 4 subunit B (630 aa).

Residues tyrosine 5, asparagine 42, aspartate 69, 110–116 (GLHGVGI), and lysine 334 each bind ATP. In terms of domain architecture, Toprim spans 412–525 (TELFLVEGDS…NGHVYVALPP (114 aa)). Glutamate 418, aspartate 490, and aspartate 492 together coordinate Mg(2+).

It belongs to the type II topoisomerase family. ParE type 1 subfamily. In terms of assembly, heterotetramer composed of ParC and ParE. Requires Mg(2+) as cofactor. Mn(2+) is required as a cofactor. Ca(2+) serves as cofactor.

The catalysed reaction is ATP-dependent breakage, passage and rejoining of double-stranded DNA.. Its function is as follows. Topoisomerase IV is essential for chromosome segregation. It relaxes supercoiled DNA. Performs the decatenation events required during the replication of a circular DNA molecule. This chain is DNA topoisomerase 4 subunit B, found in Salmonella typhi.